The primary structure comprises 479 residues: Xylose isomerase (479 aa).

H144 is a catalytic residue. Mn(2+)-binding residues include E275, E311, H314, D339, D350, D352, and Y382.

Belongs to the xylose isomerase family. As to quaternary structure, homodimer. Mn(2+) serves as cofactor.

The catalysed reaction is alpha-D-xylose = alpha-D-xylulofuranose. The sequence is that of Xylose isomerase (XYLA) from Hordeum vulgare (Barley).